A 183-amino-acid polypeptide reads, in one-letter code: Streptavidin-V1 (183 aa).

An N-terminal signal peptide occupies residues 1–24 (MRKIVVAAIAVSLTTVSITASASA). Positions 37 to 159 (AEAGITGTWY…GHDTFTKVKP (123 aa)) constitute an Avidin-like domain. Biotin is bound by residues Tyr67 and Tyr78. The Cell attachment site; atypical signature appears at 83–85 (RYD). The biotin site is built by Trp116, Trp132, and Trp144.

This sequence belongs to the avidin/streptavidin family. As to quaternary structure, homotetramer.

Its subcellular location is the secreted. Its function is as follows. The biological function of streptavidin is not known. Forms a strong non-covalent specific complex with biotin (one molecule of biotin per subunit of streptavidin). This Streptomyces violaceus (Streptomyces venezuelae) protein is Streptavidin-V1.